The sequence spans 260 residues: MICOS complex subunit mic25-a (260 aa).

A disordered region spans residues 1-92 (MGGSESTGRK…KPTARGVGHQ (92 aa)). Gly2 is lipidated: N-myristoyl glycine. Over residues 28–39 (RLSDEVVNRMKD) the composition is skewed to basic and acidic residues. The segment covering 48-64 (STSTASGTTSGPTTFPS) has biased composition (low complexity). Residues 94–187 (AEEDLYRRYE…LNSIEKKNLE (94 aa)) adopt a coiled-coil conformation. A CHCH domain is found at 213-255 (DPVCMDLQSNILKCYAENKQERLNCSDLAKEYGKCVSAAQKNL). 2 consecutive short sequence motifs (cx9C motif) follow at residues 216–226 (CMDLQSNILKC) and 237–247 (CSDLAKEYGKC). Cystine bridges form between Cys216/Cys247 and Cys226/Cys237.

This sequence belongs to the MICOS complex subunit Mic19 family. Metazoan Mic25 subfamily. As to quaternary structure, component of the mitochondrial contact site and cristae organizing system (MICOS) complex (also known as MINOS or MitOS complex).

The protein resides in the mitochondrion inner membrane. Functionally, component of the MICOS complex, a large protein complex of the mitochondrial inner membrane that plays crucial roles in the maintenance of crista junctions, inner membrane architecture, and formation of contact sites to the outer membrane. The chain is MICOS complex subunit mic25-a (chchd6-a) from Xenopus laevis (African clawed frog).